We begin with the raw amino-acid sequence, 221 residues long: Translation initiation factor 6 (221 aa).

It belongs to the eIF-6 family.

In terms of biological role, binds to the 50S ribosomal subunit and prevents its association with the 30S ribosomal subunit to form the 70S initiation complex. This Halorubrum lacusprofundi (strain ATCC 49239 / DSM 5036 / JCM 8891 / ACAM 34) protein is Translation initiation factor 6.